We begin with the raw amino-acid sequence, 487 residues long: Lysophospholipid acyltransferase 5 (487 aa).

The residue at position 2 (alanine 2) is an N-acetylalanine. Transmembrane regions (helical) follow at residues 44–64 (LIFSIFLGYPLALFYRHYLFY), 84–104 (FNFGHQFYHSLLCVVLQFLIL), 111–131 (VTAVITTLCFQMAYLLAGYYY), and 180–200 (GVPSLLEVAGFSYFYGAFLVG). Asparagine 225 carries an N-linked (GlcNAc...) asparagine glycan. 2 helical membrane-spanning segments follow: residues 236–256 (LGLVYLVGYTLLSPHITDDYL) and 285–305 (VTCWLVTEGVCILSGLGFNGF). Asparagine 308 and asparagine 331 each carry an N-linked (GlcNAc...) asparagine glycan. Catalysis depends on residues asparagine 338 and histidine 374. 3 consecutive transmembrane segments (helical) span residues 364-384 (GLSLLFLALWHGLHSGYLICF), 422-442 (LVQQTIHWLFMGYSMTAFCLF), and 453-473 (SIYFLGHVFFLSLLFILPYIH). The short motif at 484-487 (KKRE) is the Di-lysine motif element.

It belongs to the membrane-bound acyltransferase family. As to expression, detected ubiquitously, with high expression levels in small intestine, brown adipose tissue, liver, kidney and testis. Expressed in liver and both proximal and distal small intestine (at protein level). Expressed in peritoneal macrophages.

The protein resides in the endoplasmic reticulum membrane. It carries out the reaction a 1-acyl-sn-glycero-3-phosphocholine + an acyl-CoA = a 1,2-diacyl-sn-glycero-3-phosphocholine + CoA. The catalysed reaction is a 1-acyl-sn-glycero-3-phosphoethanolamine + an acyl-CoA = a 1,2-diacyl-sn-glycero-3-phosphoethanolamine + CoA. It catalyses the reaction a 1-acyl-sn-glycero-3-phospho-L-serine + an acyl-CoA = a 1,2-diacyl-sn-glycero-3-phospho-L-serine + CoA. The enzyme catalyses (9Z,12Z)-octadecadienoyl-CoA + a 1-acyl-sn-glycero-3-phosphocholine = 1-acyl-2-(9Z,12Z)-octadecadienoyl-sn-glycero-3-phosphocholine + CoA. It carries out the reaction (5Z,8Z,11Z,14Z)-eicosatetraenoyl-CoA + a 1-acyl-sn-glycero-3-phosphocholine = 1-acyl-2-(5Z,8Z,11Z,14Z-eicosatetraenoyl)-sn-glycero-3-phosphocholine + CoA. The catalysed reaction is dodecanoyl-CoA + 1-hexadecanoyl-sn-glycero-3-phosphocholine = 1-hexadecanoyl-2-dodecanoyl-sn-glycero-3-phosphocholine + CoA. It catalyses the reaction octadecanoyl-CoA + 1-hexadecanoyl-sn-glycero-3-phosphocholine = 1-hexadecanoyl-2-octadecanoyl-sn-glycero-3-phosphocholine + CoA. The enzyme catalyses 1-dodecanoyl-sn-glycero-3-phosphocholine + hexadecanoyl-CoA = 1-dodecanoyl-2-hexadecanoyl-sn-glycero-3-phosphocholine + CoA. It carries out the reaction 1-tetradecanoyl-sn-glycero-3-phosphocholine + hexadecanoyl-CoA = 1-tetradecanoyl-2-hexadecanoyl-sn-glycero-3-phosphocholine + CoA. The catalysed reaction is 1-hexadecanoyl-sn-glycero-3-phosphocholine + hexadecanoyl-CoA = 1,2-dihexadecanoyl-sn-glycero-3-phosphocholine + CoA. It catalyses the reaction 1-octadecanoyl-sn-glycero-3-phosphocholine + hexadecanoyl-CoA = 1-octadecanoyl-2-hexadecanoyl-sn-glycero-3-phosphocholine + CoA. The enzyme catalyses 1-(9Z-octadecenoyl)-sn-glycero-3-phosphocholine + hexadecanoyl-CoA = 1-(9Z-octadecenoyl)-2-hexadecanoyl-sn-glycero-3-phosphocholine + CoA. It carries out the reaction (9Z)-hexadecenoyl-CoA + 1-hexadecanoyl-sn-glycero-3-phosphocholine = 1-hexadecanoyl-2-(9Z-hexadecenoyl)-sn-glycero-3-phosphocholine + CoA. The catalysed reaction is 1-hexadecanoyl-sn-glycero-3-phosphocholine + (9Z)-octadecenoyl-CoA = 1-hexadecanoyl-2-(9Z-octadecenoyl)-sn-glycero-3-phosphocholine + CoA. It catalyses the reaction (9Z,12Z)-octadecadienoyl-CoA + 1-hexadecanoyl-sn-glycero-3-phosphocholine = 1-hexadecanoyl-2-(9Z,12Z-octadecadienoyl)-sn-glycero-3-phosphocholine + CoA. The enzyme catalyses 1-dodecanoyl-sn-glycero-3-phosphocholine + (5Z,8Z,11Z,14Z)-eicosatetraenoyl-CoA = 1-dodecanoyl-2-(5Z,8Z,11Z,14Z)-eicosatetraenoyl-sn-glycero-3-phosphocholine + CoA. It carries out the reaction (5Z,8Z,11Z,14Z)-eicosatetraenoyl-CoA + 1-hexadecanoyl-sn-glycero-3-phosphocholine = 1-hexadecanoyl-2-(5Z,8Z,11Z,14Z-eicosatetraenoyl)-sn-glycero-3-phosphocholine + CoA. The catalysed reaction is 1-octadecanoyl-sn-glycero-3-phosphocholine + (5Z,8Z,11Z,14Z)-eicosatetraenoyl-CoA = 1-octadecanoyl-2-(5Z,8Z,11Z,14Z-eicosatetraenoyl)-sn-glycero-3-phosphocholine + CoA. It catalyses the reaction 1-eicosanoyl-sn-glycero-3-phosphocholine + (5Z,8Z,11Z,14Z)-eicosatetraenoyl-CoA = 1-eicosanoyl-2-(5Z,8Z,11Z,14Z)-eicosatetraenoyl-sn-glycero-3-phosphocholine + CoA. The enzyme catalyses 1-(9Z-octadecenoyl)-sn-glycero-3-phosphocholine + (9Z)-octadecenoyl-CoA = 1,2-di-(9Z-octadecenoyl)-sn-glycero-3-phosphocholine + CoA. It carries out the reaction 1-(9Z-octadecenoyl)-sn-glycero-3-phosphocholine + (9Z,12Z)-octadecadienoyl-CoA = 1-(9Z)-octadecenoyl-2-(9Z,12Z)-octadecadienoyl-sn-glycero-3-phosphocholine + CoA. The catalysed reaction is 1-(9Z-octadecenoyl)-sn-glycero-3-phosphocholine + (5Z,8Z,11Z,14Z)-eicosatetraenoyl-CoA = 1-(9Z)-octadecenoyl-2-(5Z,8Z,11Z,14Z)-icosatetraenoyl-sn-glycero-3-phosphocholine + CoA. It catalyses the reaction a 1-acyl-sn-glycero-3-phosphoethanolamine + (9Z,12Z)-octadecadienoyl-CoA = 1-acyl-2-(9Z,12Z)-octadecadienoyl-sn-glycero-3-phosphoethanolamine + CoA. The enzyme catalyses 1-(9Z-octadecenoyl)-sn-glycero-3-phosphoethanolamine + (9Z,12Z)-octadecadienoyl-CoA = 1-(9Z)-octadecenoyl-2-(9Z,12Z)-octadecadienoyl-sn-glycero-3-phosphoethanolamine + CoA. It carries out the reaction 1-(10Z-heptadecenoyl)-sn-glycero-3-phosphoethanolamine + (9Z,12Z)-octadecadienoyl-CoA = 1-(10Z-heptadecenoyl)-2-(9Z,12Z-octadecadienoyl)-sn-glycero-3-phosphoethanolamine + CoA. The catalysed reaction is a 1-acyl-sn-glycero-3-phosphoethanolamine + (5Z,8Z,11Z,14Z)-eicosatetraenoyl-CoA = 1-acyl-2-(5Z,8Z,11Z,14Z)-eicosatetraenoyl-sn-glycero-3-phosphoethanolamine + CoA. It catalyses the reaction 1-hexadecanoyl-sn-glycero-3-phosphoethanolamine + (5Z,8Z,11Z,14Z)-eicosatetraenoyl-CoA = 1-hexadecanoyl-2-(5Z,8Z,11Z,14Z-eicosatetraenoyl)-sn-glycero-3-phosphoethanolamine + CoA. The enzyme catalyses 1-(9Z-octadecenoyl)-sn-glycero-3-phosphoethanolamine + (5Z,8Z,11Z,14Z)-eicosatetraenoyl-CoA = 1-(9Z)-octadecenoyl-2-(5Z,8Z,11Z,14Z)-eicosatetraenoyl-sn-glycero-3-phosphoethanolamine + CoA. It carries out the reaction 1-(10Z-heptadecenoyl)-sn-glycero-3-phosphoethanolamine + (5Z,8Z,11Z,14Z)-eicosatetraenoyl-CoA = 1-(10Z-heptadecenoyl)-2-(5Z,8Z,11Z,14Z-eicosatetraenoyl)-sn-glycero-3-phosphoethanolamine + CoA. The catalysed reaction is a 1-O-(1Z-alkenyl)-sn-glycero-3-phosphoethanolamine + (5Z,8Z,11Z,14Z)-eicosatetraenoyl-CoA = 1-O-(1Z)-alkenyl-2-(5Z,8Z,11Z,14Z)-eicosatetraenoyl-sn-glycero-3-phosphoethanolamine + CoA. It catalyses the reaction a 1-acyl-sn-glycero-3-phospho-L-serine + (9Z,12Z)-octadecadienoyl-CoA = 1-acyl-2-(9Z,12Z-octadecadienoyl)-sn-glycero-3-phospho-L-serine + CoA. The enzyme catalyses a 1-acyl-sn-glycero-3-phospho-L-serine + (5Z,8Z,11Z,14Z)-eicosatetraenoyl-CoA = 1-acyl-2-(5Z,8Z,11Z,14Z-eicosatetraenoyl)-sn-glycero-3-phospho-L-serine + CoA. It carries out the reaction 1-hexadecanoyl-sn-glycero-3-phospho-L-serine + (9Z)-octadecenoyl-CoA = 1-hexadecanoyl-2-(9Z-octadecenoyl)-sn-glycero-3-phospho-L-serine + CoA. The catalysed reaction is 1-(9Z-octadecenoyl)-sn-glycero-3-phospho-L-serine + (9Z)-octadecenoyl-CoA = 1,2-di-(9Z)-octadecenoyl-sn-glycero-3-phospho-L-serine + CoA. It catalyses the reaction 1-hexadecanoyl-sn-glycero-3-phospho-L-serine + (9Z,12Z)-octadecadienoyl-CoA = 1-hexadecanoyl-2-(9Z,12Z-octadecadienoyl)-sn-glycero-3-phospho-L-serine + CoA. The enzyme catalyses 1-(9Z-octadecenoyl)-sn-glycero-3-phospho-L-serine + (9Z,12Z)-octadecadienoyl-CoA = 1-(9Z-octadecenoyl)-2-(9Z,12Z-octadienoyl)-sn-glycero-3-phospho-L-serine + CoA. It carries out the reaction 1-hexadecanoyl-sn-glycero-3-phospho-L-serine + (5Z,8Z,11Z,14Z)-eicosatetraenoyl-CoA = 1-hexadecanoyl-2-(5Z,8Z,11Z,14Z-eicosatetraenoyl)-sn-glycero-3-phospho-L-serine + CoA. The catalysed reaction is 1-(9Z-octadecenoyl)-sn-glycero-3-phospho-L-serine + (5Z,8Z,11Z,14Z)-eicosatetraenoyl-CoA = 1-(9Z-octadecenoyl)-2-(5Z,8Z,11Z,14Z-eicosatetraenoyl)-sn-glycero-3-phospho-L-serine + CoA. It functions in the pathway lipid metabolism; phospholipid metabolism. Lysophospholipid O-acyltransferase (LPLAT) that catalyzes the reacylation step of the phospholipid remodeling process also known as the Lands cycle. Catalyzes transfer of the fatty acyl chain from fatty acyl-CoA to 1-acyl lysophospholipid to form various classes of phospholipids. Converts 1-acyl lysophosphatidylcholine (LPC) into phosphatidylcholine (PC) (LPCAT activity), 1-acyl lysophosphatidylserine (LPS) into phosphatidylserine (PS) (LPSAT activity) and 1-acyl lysophosphatidylethanolamine (LPE) into phosphatidylethanolamine (PE) (LPEAT activity). Favors polyunsaturated fatty acyl-CoAs as acyl donors compared to saturated fatty acyl-CoAs. Has higher activity for LPC acyl acceptors compared to LPEs and LPSs. Can also transfer the fatty acyl chain from fatty acyl-CoA to 1-O-alkyl lysophospholipid or 1-O-alkenyl lysophospholipid with lower efficiency. Acts as a major LPC O-acyltransferase in liver and intestine. As a component of the liver X receptor/NR1H3 or NR1H2 signaling pathway, mainly catalyzes the incorporation of arachidonate into PCs of endoplasmic reticulum (ER) membranes, increasing membrane dynamics and enabling triacylglycerols transfer to nascent very low-density lipoprotein (VLDL) particles. Promotes processing of sterol regulatory protein SREBF1 in hepatocytes, likely by facilitating the translocation of SREBF1-SCAP complex from ER to the Golgi apparatus. Participates in mechanisms by which the liver X receptor/NR1H3 or NR1H2 signaling pathway counteracts lipid-induced ER stress response and inflammation. Down-regulates hepatic inflammation by limiting arachidonic acid availability for synthesis of inflammatory eicosanoids, such as prostaglandins. In enterocytes, acts as a component of a gut-brain feedback loop that coordinates dietary lipid absorption and food intake. Regulates the abundance of PCs containing linoleate and arachidonate in enterocyte membranes, enabling passive diffusion of fatty acids and cholesterol across the membrane for efficient chylomicron assembly. In the intestinal crypt, acts as a component of dietary-responsive phospholipid-cholesterol axis, regulating the biosynthesis of cholesterol and its mitogenic effects on intestinal stem cells. The protein is Lysophospholipid acyltransferase 5 (Lpcat3) of Mus musculus (Mouse).